A 229-amino-acid chain; its full sequence is Small ribosomal subunit protein uS3 (229 aa).

A KH type-2 domain is found at 38 to 106; it reads IREYIENKLF…KVHINVMEVK (69 aa). The span at 208 to 217 shows a compositional bias: acidic residues; sequence PEVDENEETK. The disordered stretch occupies residues 208–229; that stretch reads PEVDENEETKEENKEKSEEKSE. A compositionally biased stretch (basic and acidic residues) spans 218–229; the sequence is EENKEKSEEKSE.

Belongs to the universal ribosomal protein uS3 family. Part of the 30S ribosomal subunit. Forms a tight complex with proteins S10 and S14.

Functionally, binds the lower part of the 30S subunit head. Binds mRNA in the 70S ribosome, positioning it for translation. The chain is Small ribosomal subunit protein uS3 from Natranaerobius thermophilus (strain ATCC BAA-1301 / DSM 18059 / JW/NM-WN-LF).